The following is a 392-amino-acid chain: Putative purine permease 19 (392 aa).

Residues 1–16 (MGFHTKSPDRVTHEEE) show a composition bias toward basic and acidic residues. Residues 1-29 (MGFHTKSPDRVTHEEEANIGVDNQPRETT) are disordered. Position 30 is a phosphoserine (serine 30). 10 helical membrane-spanning segments follow: residues 46–66 (ICIFVCSCLVVAGRVLSTLLL), 88–108 (WLQSMVQNAAFPFTAFLLLLW), 128–148 (LFLLYISLGVLFAAYSQLYAI), 154–174 (VFFLWIFTSQLIFTSIFTTII), 182–202 (WIILSMVLSGAATGLGITSSG), 220–240 (WCAFFGTVAFSLSLCIMQLGF), 254–274 (VILMQTNASMIATLICLVGLF), 300–320 (LIGLSLAWQVMSLGLVGLVCL), 325–345 (FSNVVSFCSTPLVNILLVLAF), and 354–374 (FFKEGALVAGILGFASYVYSL).

The protein belongs to the purine permeases (TC 2.A.7.14) family.

Its subcellular location is the membrane. This Arabidopsis thaliana (Mouse-ear cress) protein is Putative purine permease 19 (PUP19).